The sequence spans 259 residues: uncharacterized protein (259 aa).

Positions 9, 11, 97, 133, 157, and 207 each coordinate a divalent metal cation.

It belongs to the metallo-dependent hydrolases superfamily. TatD-type hydrolase family. It depends on a divalent metal cation as a cofactor.

This is an uncharacterized protein from Escherichia coli (strain K12).